Reading from the N-terminus, the 1203-residue chain is DNA-directed RNA polymerase subunit beta' (1203 aa).

The Zn(2+) site is built by Cys60, Cys62, Cys75, and Cys78. Residues Asp449, Asp451, and Asp453 each coordinate Mg(2+). Residues Cys818, Cys892, Cys899, and Cys902 each coordinate Zn(2+). Residues 1180–1203 are disordered; sequence RNLESGLDMPESAEESSEEETQTV. The span at 1190 to 1203 shows a compositional bias: acidic residues; sequence ESAEESSEEETQTV.

Belongs to the RNA polymerase beta' chain family. As to quaternary structure, the RNAP catalytic core consists of 2 alpha, 1 beta, 1 beta' and 1 omega subunit. When a sigma factor is associated with the core the holoenzyme is formed, which can initiate transcription. Mg(2+) serves as cofactor. The cofactor is Zn(2+).

It catalyses the reaction RNA(n) + a ribonucleoside 5'-triphosphate = RNA(n+1) + diphosphate. DNA-dependent RNA polymerase catalyzes the transcription of DNA into RNA using the four ribonucleoside triphosphates as substrates. This chain is DNA-directed RNA polymerase subunit beta', found in Oceanobacillus iheyensis (strain DSM 14371 / CIP 107618 / JCM 11309 / KCTC 3954 / HTE831).